The chain runs to 228 residues: Prolactin-2A1 (228 aa).

A signal peptide spans 1-29 (MQLSITHPCCWTLRLLLVSNLLLWENVAL). 2 disulfides stabilise this stretch: Cys-87–Cys-203 and Cys-220–Cys-228.

The protein belongs to the somatotropin/prolactin family. Expressed specifically in the placenta. Highly expressed in invasive trophoblast cells lining the central placental vessel.

It is found in the secreted. The protein is Prolactin-2A1 (Prl2a1) of Rattus norvegicus (Rat).